We begin with the raw amino-acid sequence, 142 residues long: SLTAKSKSIVKAFWGKIGSRADDIGAEAFGRMLTVYPETKTYFASWSDLSPGSAAVKKHGKTIMGGIAEAVGHIDDLTGGLASLSELHAFKLRVDPANFKILAHNLIVVLALFFPADFTPEVHMAVDKFFQNVASALSEKYR.

N-acetylserine is present on Ser-1. Residues 1 to 142 (SLTAKSKSIV…VASALSEKYR (142 aa)) enclose the Globin domain. An O2-binding site is contributed by His-59. His-88 serves as a coordination point for heme b.

Belongs to the globin family. In terms of assembly, heterotetramer of two alpha chains and two beta chains. As to expression, red blood cells.

Functionally, involved in oxygen transport from gills to the various peripheral tissues. This chain is Hemoglobin subunit alpha (hba), found in Electrophorus electricus (Electric eel).